The following is a 537-amino-acid chain: MADTIHWADVIAEDVLKKNGKHLVATGITPSGNIHIGNMREVVTADAVYRALVDKGANADFIYIADNYDPLRKVYPFLPESYVEHVGKPISEIPCPCGNCANYAEHFLKPFLEALRRLGINPKVYRADEMYKTGKYTEAIKTALVKRDAIAKILEEVSGKTVASDWSPFNPRCDQCGRITTTKVTGFDLEAETVDYVCACEHSGTVPMAGGGKLTWRVDWPARWSVLGVTVEPFGKDHASRGGSYDTGKRIVKEIFGHEPPYPIVYEWIMLGKQGAMSSSTGVVVSISDMLKIVPPEVLRYLIIRTKPEKHIQFDPGQPLLSLVDEYERLRTQFRENDPSLGTFQGRVYELSRATGVCQSEIPFKQMVTIYQVARGDFDQVLKIVKRSGFSTEDKKCIKELADNVSKWLKLYAPPFAKFKVKEKVPVQAATLSELQRAFLSAFAALIESRDEISGEEYHMLVYSAKDEGSELNRRIAEKLNAHAPQVDPRELFKAIYISLLGQSSGPKAGWFLSSFEKEFLVERFEEASNYSPEINV.

A 'HIGH' region motif is present at residues 30–38; sequence PSGNIHIGN. The 'KMSKS' region motif lies at 276-280; the sequence is AMSSS.

It belongs to the class-I aminoacyl-tRNA synthetase family.

The protein localises to the cytoplasm. It carries out the reaction tRNA(Lys) + L-lysine + ATP = L-lysyl-tRNA(Lys) + AMP + diphosphate. The polypeptide is Lysine--tRNA ligase (Methanosarcina barkeri).